The sequence spans 685 residues: Sodium-dependent phosphate transporter 1-A (685 aa).

The next 6 helical transmembrane spans lie at 21-41 (IMAPYLWMLVLGFVIAFVLAF), 66-86 (ACILASIFETVGSVLLGAKVS), 106-126 (LMAGSISAMFGSAVWQLAASF), 162-182 (IVLSWFISPLLSGIMSALLFL), 207-227 (ACTIGINLFSIMFTGAPLLGF), and 234-254 (GIILISVGCAVLCALIVWFVV). Disordered regions lie at residues 438-458 (RNRDTEARPDEAEKSTVHGAD) and 483-513 (EAEEQEEGSVEDVETDRKSSSSSLEERHDQD). The segment covering 483-496 (EAEEQEEGSVEDVE) has biased composition (acidic residues). Over residues 497–513 (TDRKSSSSSLEERHDQD) the composition is skewed to basic and acidic residues. The next 4 membrane-spanning stretches (helical) occupy residues 517 to 537 (VSLLFQFLQILTACFGSFAHG), 565 to 585 (ATPIWLLLYGGIGICIGLWVW), 606 to 626 (FSIELASALTVVIASNVGLPI), and 656 to 676 (IFLAWFVTVPISGLISAGIMA).

This sequence belongs to the inorganic phosphate transporter (PiT) (TC 2.A.20) family.

It is found in the membrane. Functionally, sodium-phosphate symporter which plays a fundamental housekeeping role in phosphate transport. In Xenopus laevis (African clawed frog), this protein is Sodium-dependent phosphate transporter 1-A (slc20a1-a).